A 364-amino-acid polypeptide reads, in one-letter code: Aminomethyltransferase (364 aa).

It belongs to the GcvT family. The glycine cleavage system is composed of four proteins: P, T, L and H.

It catalyses the reaction N(6)-[(R)-S(8)-aminomethyldihydrolipoyl]-L-lysyl-[protein] + (6S)-5,6,7,8-tetrahydrofolate = N(6)-[(R)-dihydrolipoyl]-L-lysyl-[protein] + (6R)-5,10-methylene-5,6,7,8-tetrahydrofolate + NH4(+). In terms of biological role, the glycine cleavage system catalyzes the degradation of glycine. The chain is Aminomethyltransferase from Escherichia coli (strain SMS-3-5 / SECEC).